Reading from the N-terminus, the 308-residue chain is Methionyl-tRNA formyltransferase (308 aa).

110 to 113 (SLLP) is a (6S)-5,6,7,8-tetrahydrofolate binding site.

It belongs to the Fmt family.

The enzyme catalyses L-methionyl-tRNA(fMet) + (6R)-10-formyltetrahydrofolate = N-formyl-L-methionyl-tRNA(fMet) + (6S)-5,6,7,8-tetrahydrofolate + H(+). Attaches a formyl group to the free amino group of methionyl-tRNA(fMet). The formyl group appears to play a dual role in the initiator identity of N-formylmethionyl-tRNA by promoting its recognition by IF2 and preventing the misappropriation of this tRNA by the elongation apparatus. This is Methionyl-tRNA formyltransferase from Neisseria meningitidis serogroup C (strain 053442).